We begin with the raw amino-acid sequence, 146 residues long: Hemoglobin subunit beta (146 aa).

At Ala-1 the chain carries N-acetylalanine. Positions 2-146 (SFDPHEKQLI…VAAALAAEYH (145 aa)) constitute a Globin domain. Heme b is bound by residues His-63 and His-92.

The protein belongs to the globin family. As to quaternary structure, heterotetramer of two alpha chains and two beta chains. Red blood cells.

Its function is as follows. Involved in oxygen transport from the lung to the various peripheral tissues. In Crocodylus niloticus (Nile crocodile), this protein is Hemoglobin subunit beta (HBB).